A 145-amino-acid chain; its full sequence is Large ribosomal subunit protein eL32 (145 aa).

Belongs to the eukaryotic ribosomal protein eL32 family.

In Aeropyrum pernix (strain ATCC 700893 / DSM 11879 / JCM 9820 / NBRC 100138 / K1), this protein is Large ribosomal subunit protein eL32 (rpl32e).